A 94-amino-acid chain; its full sequence is Long neurotoxin-like OH-31 (94 aa).

The N-terminal stretch at 1-19 (MKTLLLTLVVVTILCLDLG) is a signal peptide. 4 disulfides stabilise this stretch: cysteine 35/cysteine 55, cysteine 37/cysteine 66, cysteine 70/cysteine 81, and cysteine 82/cysteine 87.

It belongs to the three-finger toxin family. Long-chain subfamily. Type II alpha-neurotoxin sub-subfamily. In terms of tissue distribution, expressed by the venom gland.

The protein resides in the secreted. Binds with high affinity to muscular nicotinic acetylcholine receptors (nAChRs), whereas it binds with a low affinity to neuronal alpha-7/CHRNA7 nAChRs. In Ophiophagus hannah (King cobra), this protein is Long neurotoxin-like OH-31.